Here is a 551-residue protein sequence, read N- to C-terminus: Glucans biosynthesis protein D (551 aa).

The segment at residues 1-32 (MDRRRFIKGSMAMAAVCGTSGIASLFSQAAFA) is a signal peptide (tat-type signal).

It belongs to the OpgD/OpgG family. In terms of processing, predicted to be exported by the Tat system. The position of the signal peptide cleavage has not been experimentally proven.

The protein localises to the periplasm. It participates in glycan metabolism; osmoregulated periplasmic glucan (OPG) biosynthesis. Functionally, probably involved in the control of the structural glucose backbone of osmoregulated periplasmic glucans (OPGs). The polypeptide is Glucans biosynthesis protein D (mdoD) (Shigella flexneri).